The sequence spans 123 residues: Phosphoribosyl-AMP cyclohydrolase (123 aa).

A Mg(2+)-binding site is contributed by Asp81. Zn(2+) is bound at residue Cys82. Mg(2+) is bound by residues Asp83 and Asp85. 2 residues coordinate Zn(2+): Cys98 and Cys105.

Belongs to the PRA-CH family. As to quaternary structure, homodimer. Mg(2+) is required as a cofactor. The cofactor is Zn(2+).

The protein resides in the cytoplasm. It catalyses the reaction 1-(5-phospho-beta-D-ribosyl)-5'-AMP + H2O = 1-(5-phospho-beta-D-ribosyl)-5-[(5-phospho-beta-D-ribosylamino)methylideneamino]imidazole-4-carboxamide. The protein operates within amino-acid biosynthesis; L-histidine biosynthesis; L-histidine from 5-phospho-alpha-D-ribose 1-diphosphate: step 3/9. Catalyzes the hydrolysis of the adenine ring of phosphoribosyl-AMP. The chain is Phosphoribosyl-AMP cyclohydrolase from Nocardioides sp. (strain ATCC BAA-499 / JS614).